The following is a 115-amino-acid chain: Large ribosomal subunit protein bL20 (115 aa).

Belongs to the bacterial ribosomal protein bL20 family.

In terms of biological role, binds directly to 23S ribosomal RNA and is necessary for the in vitro assembly process of the 50S ribosomal subunit. It is not involved in the protein synthesizing functions of that subunit. This chain is Large ribosomal subunit protein bL20, found in Synechococcus sp. (strain RCC307).